The sequence spans 455 residues: MKDKYLTVTALTKYVKRKMDSDPHLRDIWLRGEISNFKHHSRGHMYLTIKDDSARIQAVMFASSNRKLLFHPENGMNVLIRGEISVFEAYGQYQLYIHEMEPDGIGSLYQAFEQLKERLHKQGYFADEYKKPIPRYPKNIAVITSPTGAAIRDILTTMKRRYPSVKITVFPVLVQGNQAKASIARSIQQADSLSYDVIIVGRGGGSIEELWSFNEEEVARAIFESKTPIISAVGHETDTTISDFVADLRAPTPTAAGELAVPSQVELLDKIEIQKRQLARLLKQYISQHETILHQLRQTYAFKYPHQLVKQKEQELDSTMDNLQRRMKSKVSDDKLTHNHLIKRLSSQHPQRELRLAIDKLRQLHSLQNKMMNNYLEQQSQRLYSQIDKLSLVNPLEIMKRGYALPYNEDGALIKSVKHLHINDTIQLRIADGEVTGKVTAIKEANENGNEGSNV.

Belongs to the XseA family. Heterooligomer composed of large and small subunits.

The protein resides in the cytoplasm. It catalyses the reaction Exonucleolytic cleavage in either 5'- to 3'- or 3'- to 5'-direction to yield nucleoside 5'-phosphates.. Its function is as follows. Bidirectionally degrades single-stranded DNA into large acid-insoluble oligonucleotides, which are then degraded further into small acid-soluble oligonucleotides. In Oceanobacillus iheyensis (strain DSM 14371 / CIP 107618 / JCM 11309 / KCTC 3954 / HTE831), this protein is Exodeoxyribonuclease 7 large subunit.